The primary structure comprises 178 residues: ATP-dependent protease subunit HslV (178 aa).

Residue T7 is part of the active site. Na(+) contacts are provided by G162, C165, and T168.

It belongs to the peptidase T1B family. HslV subfamily. A double ring-shaped homohexamer of HslV is capped on each side by a ring-shaped HslU homohexamer. The assembly of the HslU/HslV complex is dependent on binding of ATP.

It localises to the cytoplasm. The catalysed reaction is ATP-dependent cleavage of peptide bonds with broad specificity.. Allosterically activated by HslU binding. In terms of biological role, protease subunit of a proteasome-like degradation complex believed to be a general protein degrading machinery. The protein is ATP-dependent protease subunit HslV of Dechloromonas aromatica (strain RCB).